Consider the following 177-residue polypeptide: Large ribosomal subunit protein uL5 (177 aa).

It belongs to the universal ribosomal protein uL5 family. In terms of assembly, part of the 50S ribosomal subunit; part of the 5S rRNA/L5/L18/L25 subcomplex. Contacts the 5S rRNA and the P site tRNA. Forms a bridge to the 30S subunit in the 70S ribosome.

In terms of biological role, this is one of the proteins that bind and probably mediate the attachment of the 5S RNA into the large ribosomal subunit, where it forms part of the central protuberance. In the 70S ribosome it contacts protein S13 of the 30S subunit (bridge B1b), connecting the 2 subunits; this bridge is implicated in subunit movement. Contacts the P site tRNA; the 5S rRNA and some of its associated proteins might help stabilize positioning of ribosome-bound tRNAs. This chain is Large ribosomal subunit protein uL5, found in Neorickettsia sennetsu (strain ATCC VR-367 / Miyayama) (Ehrlichia sennetsu).